Reading from the N-terminus, the 165-residue chain is Ribosomal RNA large subunit methyltransferase H (165 aa).

Residue G109 participates in S-adenosyl-L-methionine binding.

This sequence belongs to the RNA methyltransferase RlmH family. In terms of assembly, homodimer.

The protein resides in the cytoplasm. The enzyme catalyses pseudouridine(1915) in 23S rRNA + S-adenosyl-L-methionine = N(3)-methylpseudouridine(1915) in 23S rRNA + S-adenosyl-L-homocysteine + H(+). In terms of biological role, specifically methylates the pseudouridine at position 1915 (m3Psi1915) in 23S rRNA. The protein is Ribosomal RNA large subunit methyltransferase H of Methylorubrum populi (strain ATCC BAA-705 / NCIMB 13946 / BJ001) (Methylobacterium populi).